Here is an 81-residue protein sequence, read N- to C-terminus: MGQLCCFPFARDEGKICEKDRREPEDAELVRLSKRLVENAVLKAVQQYLEETQNKKQPGEGNSTKAEEGDRNGDGSDNNRK.

Residue Gly2 is the site of N-myristoyl glycine attachment. Positions 2–11 (GQLCCFPFAR) are required for membrane localization. 2 S-palmitoyl cysteine lipidation sites follow: Cys5 and Cys6. The interval 29-42 (LVRLSKRLVENAVL) is RII-binding. Residues 49-81 (LEETQNKKQPGEGNSTKAEEGDRNGDGSDNNRK) are disordered. The span at 65–81 (KAEEGDRNGDGSDNNRK) shows a compositional bias: basic and acidic residues.

In terms of assembly, binds cAMP-dependent protein kinase (PKA). Interacts with PRKCA; only the cytoplasmic form is capable of interacting with PRKCA.

The protein resides in the lateral cell membrane. Its function is as follows. Targets the cAMP-dependent protein kinase (PKA) to the plasma membrane, and permits functional coupling to the L-type calcium channel. The membrane-associated form reduces epithelial sodium channel (ENaC) activity, whereas the free cytoplasmic form may negatively regulate ENaC channel feedback inhibition by intracellular sodium. In Mus musculus (Mouse), this protein is A-kinase anchor protein 7 isoform alpha (Akap7).